The following is a 471-amino-acid chain: Glutamate--tRNA ligase (471 aa).

Positions 9–19 match the 'HIGH' region motif; the sequence is PSPTGYLHVGG. 4 residues coordinate Zn(2+): cysteine 98, cysteine 100, cysteine 125, and histidine 127. The short motif at 237 to 241 is the 'KMSKS' region element; it reads KLSKR. An ATP-binding site is contributed by lysine 240.

It belongs to the class-I aminoacyl-tRNA synthetase family. Glutamate--tRNA ligase type 1 subfamily. In terms of assembly, monomer. Zn(2+) is required as a cofactor.

It is found in the cytoplasm. It catalyses the reaction tRNA(Glu) + L-glutamate + ATP = L-glutamyl-tRNA(Glu) + AMP + diphosphate. In terms of biological role, catalyzes the attachment of glutamate to tRNA(Glu) in a two-step reaction: glutamate is first activated by ATP to form Glu-AMP and then transferred to the acceptor end of tRNA(Glu). The chain is Glutamate--tRNA ligase from Escherichia coli (strain ATCC 8739 / DSM 1576 / NBRC 3972 / NCIMB 8545 / WDCM 00012 / Crooks).